The chain runs to 282 residues: MPGVTSQSAGSKYDAIPGPLGLASASLMGKVALVTGAGRGIGREMAMELGRRGAKVIVNYANSAETAEEVVQAIKKSGSDAASIKANVSDVDQIVKMFGEAKQIWGRLDIVCSNSGVVSFGHVKDVTPEEFDRVFAINTRGQFFVAREAYKHLEVGGRLILMGSITGQAKGVPKHAVYSGSKGTIETFVRCMAIDFGDKKITVNAVAPGGIKTDMYRDVCREYIPNGGELDDEGVDEFAAGWSPMHRVGLPIDIARVVCFLASQDGEWINGKVLGIDGAACM.

NADP(+)-binding residues include Ile41, Asn114, and Arg147. Catalysis depends on proton donor residues Ser164 and Tyr178. Residues Tyr178, Lys182, Ile211, and Thr213 each coordinate NADP(+). The active-site Lowers pKa of active site Tyr is Lys182.

This sequence belongs to the short-chain dehydrogenases/reductases (SDR) family. In terms of assembly, homotetramer.

It functions in the pathway pigment biosynthesis; melanin biosynthesis. Functionally, catalyzes the NADPH-dependent reduction of 1,3,8-trihydroxynaphthalene (T3HN) into (-)-vermelone. Essential for appressorial penetration of colletotrichum lagenarium. The protein is Trihydroxynaphthalene reductase (THR1) of Colletotrichum orbiculare (strain 104-T / ATCC 96160 / CBS 514.97 / LARS 414 / MAFF 240422) (Cucumber anthracnose fungus).